A 159-amino-acid chain; its full sequence is Regulatory protein RecX (159 aa).

This sequence belongs to the RecX family.

The protein resides in the cytoplasm. Its function is as follows. Modulates RecA activity. This Chlorobium limicola (strain DSM 245 / NBRC 103803 / 6330) protein is Regulatory protein RecX.